We begin with the raw amino-acid sequence, 806 residues long: SH3-containing GRB2-like protein 3-interacting protein 1 (806 aa).

2 disordered regions span residues 1 to 115 and 142 to 278; these read MMEG…ESHK and SIGN…QAAT. Basic and acidic residues-rich tracts occupy residues 16–32 and 40–54; these read RKKEKDTDSTGSPDRDG and PPYHSKAECAREGGK. Phosphoserine occurs at positions 78, 104, 105, 107, 149, 151, 156, and 169. Phosphothreonine is present on residues Thr180 and Thr182. Phosphoserine is present on residues Ser236 and Phe243. The segment covering 245–260 has biased composition (pro residues); that stretch reads TGTPPPLPPKTVPATP. Residues Thr247 and Thr259 each carry the phosphothreonine modification. 7 positions are modified to phosphoserine: Ser265, Asp274, Ser287, Ser289, Ser300, Ser316, and Ser319. Positions 265-276 are enriched in polar residues; that stretch reads SPLTVATGNDQA. Residues 315 to 324 show a composition bias toward basic and acidic residues; sequence FSDASPEHVT. The tract at residues 315–533 is disordered; the sequence is FSDASPEHVT…SRGPSPLTMG (219 aa). A phosphothreonine mark is found at Thr324, Thr328, and Thr335. Positions 335 to 345 are enriched in low complexity; that stretch reads TPPAASDIPAD. Phosphoserine is present on Ala338. Over residues 346 to 369 the composition is skewed to pro residues; it reads SPAPAPPGPTGSAGPPGPPGPRHV. Residue Ser371 is modified to Phosphoserine. A compositionally biased stretch (basic and acidic residues) spans 377–392; sequence EVQKKVAEQTFIKDDY. Phosphoserine is present on Ser398. Thr409 carries the phosphothreonine modification. A compositionally biased stretch (low complexity) spans 436-453; sequence TSGASSPARPATPLVPCS. A compositionally biased stretch (pro residues) spans 454–473; that stretch reads TTPPPPPPRPPSRPKLPPGK. Composition is skewed to low complexity over residues 480–490 and 497–520; these read SRPFSPPIHSS and PLARAESTSSISSTNSLSAATTPT. A phosphoserine mark is found at Ser484, Ser505, and Gly533. An MHD domain is found at 537–805; that stretch reads TLPVAAAFTE…RFAAGKYLAD (269 aa). Interaction with DPF motifs-containing proteins stretches follow at residues 539-545, 571-573, 645-648, and 791-796; these read PVAAAFT, SFP, TYYN, and SLIKKR. Residues 627 to 806 form a necessary and sufficient to mediate interaction with CANX region; the sequence is MPNLMTHLKK…FAAGKYLADN (180 aa).

As to quaternary structure, interacts with proteins essential or regulating the formation of functional clathrin-coated pits. Interacts with CANX. Interacts with AP2A1. Interacts with EPS15. Interacts with SH3GL3. Interacts with AMPH. Interacts with ITSN1 (via SH3 domains). Interacts with and REPS1. Detected in brain, spinal cord and cerebellum.

The protein localises to the membrane. The protein resides in the clathrin-coated pit. In terms of biological role, may function in clathrin-mediated endocytosis. Has both a membrane binding/tubulating activity and the ability to recruit proteins essential to the formation of functional clathrin-coated pits. Has a preference for membranes enriched in phosphatidylserine and phosphoinositides and is required for the endocytosis of the transferrin receptor. May also bind tubulin. May play a role in the regulation of energy homeostasis. The chain is SH3-containing GRB2-like protein 3-interacting protein 1 (Sgip1) from Mus musculus (Mouse).